We begin with the raw amino-acid sequence, 1828 residues long: MGAGEERPEALGFNPQKEIVYNLLLPYAHRLDRESNELLAQIKGSLGRAVRLRELWPGVLFWTRKLTTYIRLYGRKFSKEDHVLFVKLLYELVTIPKLEISMMQGFARLLISLLKKKELLSREDLQLPWRPLYEMLERILYSKTEHLGLNWFPNSVEGVLKTLVKACRPYFPDDATAEMLQEWLPLMCPFDVTMQKAISYLELFLPTSLPPDLHCKGFRLWFDEFLTLWVSVQNLPQWEGHLVNLFARLANDNIGYIDWDPYVPKIFTRILRSLNLPVGSNQVLVPRQLANAYDIGHAVIWITALMGGPSKTVQKHLTGLFNSITSFYHPSNNGRWLTKLMKLLQRLPCCIIRRLHRERYKKPSWLTPVPESHRLTDQDVTDFVESIMQPVLLAMFSKTGSLEAAQALQNLALMRPELVIPPVLEKTYPALETLTEPHQLTATLSCVIGVARSLVSGGRWFPEGPTHMLPLLMRALPGVDPNDFSKCMITFQFIATFSTLVPLVDCSSLLQERNDLSEVERELCSATAEFEDFVLQFMDRCFALIESSALEQTREETETEKMTHLESLVELGLSSTFSTILTQCSKEIFKVALEKVFNFAVSNIFETRVSGRMVADLCRAAVKCCPVESLKLFLPHCCNVISHLTINDDVMNDEELDKELLWKLQLLSEITRVDGEKLLPYKEQLVQILHRTLHFTCKQGYTLSCNLLHHLLRSSTLIYPTEYCSVPGGFDKPLSDYFPIKDWGKPGDLWNLNIKWHVPSAEEMDFAYYLLDTFLRPELQKLDLYSSGELEMSRDEVQQCLAIVHNCLTGSGNLLPPLHGERVTHLVTSMVSLNETKLFTGIDHDHSRENYRELISKTLRKLLHYILDHSEDDTKSLFLIIKIISDLLQFQGSHKHEFDSRWKSFTLVKKSMENRLHGKKRHIRALLIDRVMLQHELRTLTVEGCEYKKVHQDMLRDLLRLSTSSYGQVRNKAQQAFFTALGTYNFCCRDLIPLVLEFLRPERQDVTQQQFKGALYCLLGNHGGVCLANLHDWECIVQTWPAMISSGLSKAMSLEKPSIVRLFDDLAEKIHRQYETIGLDFSVPEKCIEIAILLQHAASTSSQLPHPEELALAIKRQGEKNVEAVQNYERLVNTLLDCVTQRNLPWKFEHIGIGFLSLLLRDDYVLPVRAIRYLVQCLNHDALIVRKMAISTVAGILKQLKRTHVKETICPYKISGCPKPESKLVGDRPDNQWLLYDSSNLPNTKEAWESCCFVEKTHWGYSSWPQNMLVYAPADQQPKVGRSREEMSEAEQIIYDHFTDEKFVDQLIKFLSLEDRKGKDKFNPRRFCLFKGLFRNYDDAFLPIIKPHLERLVADSHESTQRCAAEIVAGLIRGSKHWTFEKVENLWNFLCELLRTALSNITVETYSDWGTCIATSCESRDPRKLHWLFELLLESPVSGEGGSFVDACRLYVLQGGLAQQEWRVPELLHRLLMCLEPKLTQVYKNVRERIGSVLTYIFMIDVSLPNTAPTKSPHISDFTGRILGKLKPLMDADEEIQNHVMEENGVGEQDERTQAIKLMKTILKWIMASAGRSFCTGVTEQMQLLPLLFKIAPVENDTNYDELKRDAKTCLSLMSQGLLLPVQVPLVLDVLRQTARSSSWHARYTVLTYIQTMVFYNLFIFIHNEESVQGVRWLILQLMEDEQLEVREMAATTLSGLLQCNFLTMDAAMQAHFEALCKTRLPKKRKRESGMVGDTIPSGDLVKRHAGVLGLSACILSSPYDVPTWMPQLLMDLSVHLNDPQPIEMTVKKTLSNFRRTHHDNWQEHKQQFTDDQLIVLTDLLVSPCYYA.

HEAT repeat units lie at residues 462–506, 985–1024, 1164–1202, 1339–1377, 1621–1659, and 1665–1703; these read PEGP…LVDC, NFCC…NHGG, YVLP…QLKR, DAFL…GSKH, PVQV…YNLF, and EESV…CNFL. The interval 1635–1723 is bromodomain-like (BRDL); sequence ARSSSWHARY…EALCKTRLPK (89 aa).

This sequence belongs to the BLM10 family. Homodimer. Interacts with the 20S and 26S proteasomes.

It localises to the cytoplasm. The protein resides in the cytosol. The protein localises to the nucleus. Its subcellular location is the nucleus speckle. Functionally, associated component of the proteasome that specifically recognizes acetylated histones and promotes ATP- and ubiquitin-independent degradation of core histones during DNA damage response. Recognizes and binds acetylated histones via its bromodomain-like (BRDL) region and activates the proteasome by opening the gated channel for substrate entry. Binds to the core proteasome via its C-terminus, which occupies the same binding sites as the proteasomal ATPases, opening the closed structure of the proteasome via an active gating mechanism. involved in DNA damage response in somatic cells: binds to acetylated histones and promotes degradation of histones. The chain is Proteasome activator complex subunit 4 (psme4) from Xenopus laevis (African clawed frog).